The following is a 242-amino-acid chain: Uridylate kinase (242 aa).

16 to 19 contributes to the ATP binding site; sequence KVSG. Gly-58 is a UMP binding site. The ATP site is built by Gly-59 and Arg-63. Residues Asp-78 and 139–146 contribute to the UMP site; that span reads TGNPFCTT. Residues Thr-166, Gln-167, Tyr-172, and Asp-175 each coordinate ATP.

This sequence belongs to the UMP kinase family. Homohexamer.

The protein resides in the cytoplasm. It catalyses the reaction UMP + ATP = UDP + ADP. Its pathway is pyrimidine metabolism; CTP biosynthesis via de novo pathway; UDP from UMP (UMPK route): step 1/1. Its activity is regulated as follows. Inhibited by UTP. In terms of biological role, catalyzes the reversible phosphorylation of UMP to UDP. The chain is Uridylate kinase from Rickettsia canadensis (strain McKiel).